A 293-amino-acid chain; its full sequence is tRNA pseudouridine synthase B (293 aa).

Asp-39 serves as the catalytic Nucleophile.

Belongs to the pseudouridine synthase TruB family. Type 1 subfamily.

It catalyses the reaction uridine(55) in tRNA = pseudouridine(55) in tRNA. In terms of biological role, responsible for synthesis of pseudouridine from uracil-55 in the psi GC loop of transfer RNAs. The protein is tRNA pseudouridine synthase B of Streptococcus thermophilus (strain ATCC BAA-250 / LMG 18311).